Here is a 385-residue protein sequence, read N- to C-terminus: Lipid-A-disaccharide synthase (385 aa).

The protein belongs to the LpxB family.

The enzyme catalyses a lipid X + a UDP-2-N,3-O-bis[(3R)-3-hydroxyacyl]-alpha-D-glucosamine = a lipid A disaccharide + UDP + H(+). It functions in the pathway bacterial outer membrane biogenesis; LPS lipid A biosynthesis. Condensation of UDP-2,3-diacylglucosamine and 2,3-diacylglucosamine-1-phosphate to form lipid A disaccharide, a precursor of lipid A, a phosphorylated glycolipid that anchors the lipopolysaccharide to the outer membrane of the cell. In Xylella fastidiosa (strain M12), this protein is Lipid-A-disaccharide synthase.